Reading from the N-terminus, the 310-residue chain is Deoxyribonuclease gamma (310 aa).

Residues 1 to 25 (MSLYPASPYLASLLLFILALHGALS) form the signal peptide. Positions 40-56 (KKENHNAMDIIVKIIKR) match the Bipartite nuclear localization signal motif. Catalysis depends on residues glutamate 105 and histidine 160. An intrachain disulfide couples cysteine 199 to cysteine 236. The interval 289-310 (SRAFTNSRKSVSLKKKKKGSRS) is not required for free DNA-nuclease activity but required for activity towards liposome-coated DNA. A Nuclear localization signal motif is present at residues 301 to 307 (LKKKKKG).

It belongs to the DNase I family. Monomer. Ca(2+) is required as a cofactor. The cofactor is Mg(2+). Post-translationally, seems to be synthesized as an inactive precursor protein and converted into an active mature enzyme by removal of the N-terminal precursor peptide during apoptosis. In terms of processing, poly-ADP-ribosylated by PARP1. ADP-ribosylation negatively regulates enzymatic activity during apoptosis. Detected at high levels in spleen, lymph nodes, thymus and liver. Observed also in kidney and testis, but not in brain or heart.

It is found in the nucleus. Its subcellular location is the secreted. Its activity is regulated as follows. Inhibited by zinc. Has DNA hydrolytic activity. Is capable of both single- and double-stranded DNA cleavage, producing DNA fragments with 3'-OH ends. Can cleave chromatin to nucleosomal units and cleaves nucleosomal and liposome-coated DNA. Acts in internucleosomal DNA fragmentation (INDF) during apoptosis and necrosis. The role in apoptosis includes myogenic and neuronal differentiation, and BCR-mediated clonal deletion of self-reactive B cells. Is active on chromatin in apoptotic cell-derived membrane-coated microparticles and thus suppresses anti-DNA autoimmunity. Together with DNASE1, plays a key role in degrading neutrophil extracellular traps (NETs). NETs are mainly composed of DNA fibers and are released by neutrophils to bind pathogens during inflammation. Degradation of intravascular NETs by DNASE1 and DNASE1L3 is required to prevent formation of clots that obstruct blood vessels and cause organ damage following inflammation. This is Deoxyribonuclease gamma (Dnase1l3) from Rattus norvegicus (Rat).